Consider the following 175-residue polypeptide: Crossover junction endodeoxyribonuclease RuvC (175 aa).

Residues D16, E76, and D148 contribute to the active site. Residues D16, E76, and D148 each contribute to the Mg(2+) site.

The protein belongs to the RuvC family. In terms of assembly, homodimer which binds Holliday junction (HJ) DNA. The HJ becomes 2-fold symmetrical on binding to RuvC with unstacked arms; it has a different conformation from HJ DNA in complex with RuvA. In the full resolvosome a probable DNA-RuvA(4)-RuvB(12)-RuvC(2) complex forms which resolves the HJ. It depends on Mg(2+) as a cofactor.

It localises to the cytoplasm. The enzyme catalyses Endonucleolytic cleavage at a junction such as a reciprocal single-stranded crossover between two homologous DNA duplexes (Holliday junction).. In terms of biological role, the RuvA-RuvB-RuvC complex processes Holliday junction (HJ) DNA during genetic recombination and DNA repair. Endonuclease that resolves HJ intermediates. Cleaves cruciform DNA by making single-stranded nicks across the HJ at symmetrical positions within the homologous arms, yielding a 5'-phosphate and a 3'-hydroxyl group; requires a central core of homology in the junction. The consensus cleavage sequence is 5'-(A/T)TT(C/G)-3'. Cleavage occurs on the 3'-side of the TT dinucleotide at the point of strand exchange. HJ branch migration catalyzed by RuvA-RuvB allows RuvC to scan DNA until it finds its consensus sequence, where it cleaves and resolves the cruciform DNA. The protein is Crossover junction endodeoxyribonuclease RuvC of Bradyrhizobium sp. (strain ORS 278).